Reading from the N-terminus, the 225-residue chain is Protein LiaH (225 aa).

2 coiled-coil regions span residues 58–151 (KKYE…KEHM) and 161–182 (ESAY…IRAN).

This sequence belongs to the PspA/Vipp/IM30 family.

This chain is Protein LiaH (liaH), found in Bacillus subtilis (strain 168).